Reading from the N-terminus, the 411-residue chain is Argininosuccinate synthase (411 aa).

ATP is bound by residues 15-23 (AYSGGLDTS) and alanine 42. The L-citrulline site is built by tyrosine 93 and serine 98. Glycine 123 contributes to the ATP binding site. The L-aspartate site is built by threonine 125, asparagine 129, and aspartate 130. An L-citrulline-binding site is contributed by asparagine 129. L-citrulline-binding residues include arginine 133, serine 185, serine 194, glutamate 270, and tyrosine 282.

The protein belongs to the argininosuccinate synthase family. Type 1 subfamily. Homotetramer.

It localises to the cytoplasm. It carries out the reaction L-citrulline + L-aspartate + ATP = 2-(N(omega)-L-arginino)succinate + AMP + diphosphate + H(+). It participates in amino-acid biosynthesis; L-arginine biosynthesis; L-arginine from L-ornithine and carbamoyl phosphate: step 2/3. In Psychrobacter sp. (strain PRwf-1), this protein is Argininosuccinate synthase.